Consider the following 117-residue polypeptide: MDMRVPAQLLGLLLLWLPDTRCDIQMTQSPSSLSASVGDRVTITCRASQGISNYLAWYQQKPGKVPKLLIYAASTLQSGVPSRFSGSGSGTDFTLTISSLQPEDVATYYCQKYNSAP.

Residues 1 to 22 (MDMRVPAQLLGLLLLWLPDTRC) form the signal peptide. Residues 23-45 (DIQMTQSPSSLSASVGDRVTITC) form a framework-1 region. The region spanning 23-117 (DIQMTQSPSS…YYCQKYNSAP (95 aa)) is the Ig-like domain. Cysteine 45 and cysteine 110 are joined by a disulfide. Residues 46-56 (RASQGISNYLA) form a complementarity-determining-1 region. The tract at residues 57-71 (WYQQKPGKVPKLLIY) is framework-2. The complementarity-determining-2 stretch occupies residues 72-78 (AASTLQS). Residues 79–110 (GVPSRFSGSGSGTDFTLTISSLQPEDVATYYC) form a framework-3 region. The complementarity-determining-3 stretch occupies residues 111–117 (QKYNSAP).

As to quaternary structure, immunoglobulins are composed of two identical heavy chains and two identical light chains; disulfide-linked.

Its subcellular location is the secreted. It is found in the cell membrane. Its function is as follows. V region of the variable domain of immunoglobulin light chains that participates in the antigen recognition. Immunoglobulins, also known as antibodies, are membrane-bound or secreted glycoproteins produced by B lymphocytes. In the recognition phase of humoral immunity, the membrane-bound immunoglobulins serve as receptors which, upon binding of a specific antigen, trigger the clonal expansion and differentiation of B lymphocytes into immunoglobulins-secreting plasma cells. Secreted immunoglobulins mediate the effector phase of humoral immunity, which results in the elimination of bound antigens. The antigen binding site is formed by the variable domain of one heavy chain, together with that of its associated light chain. Thus, each immunoglobulin has two antigen binding sites with remarkable affinity for a particular antigen. The variable domains are assembled by a process called V-(D)-J rearrangement and can then be subjected to somatic hypermutations which, after exposure to antigen and selection, allow affinity maturation for a particular antigen. The chain is Immunoglobulin kappa variable 1-27 from Homo sapiens (Human).